A 423-amino-acid chain; its full sequence is uncharacterized protein (423 aa).

It belongs to the mycobacterial PPE family.

Functionally, could be required for host endothelial-cell invasion and/or intracellular survival. This is an uncharacterized protein from Mycobacterium tuberculosis (strain CDC 1551 / Oshkosh).